Consider the following 265-residue polypeptide: Major pollen allergen Hol l 1 (265 aa).

An N-terminal signal peptide occupies residues 1-25 (MASSSRSVLLLVAALFAVFLGSAHG). Residue Asn34 is glycosylated (N-linked (GlcNAc...) asparagine). The 107-residue stretch at 63–169 (GGACGYKDVD…RRVKCKYPDG (107 aa)) folds into the Expansin-like EG45 domain. The Expansin-like CBD domain occupies 183 to 264 (NYLALLVKYI…GWKADTAYEA (82 aa)).

Belongs to the expansin family. Expansin B subfamily.

The protein localises to the secreted. The polypeptide is Major pollen allergen Hol l 1 (Holcus lanatus (Yorkshire-fog)).